Consider the following 668-residue polypeptide: UvrABC system protein B (668 aa).

The 146-residue stretch at 25–170 (NSILLGNKYQ…FVGQKISIKE (146 aa)) folds into the Helicase ATP-binding domain. An ATP-binding site is contributed by 38–45 (GVTGSGKT). Positions 91 to 114 (YYDYYQPESYVPSKDLFIEKEATI) match the Beta-hairpin motif. One can recognise a Helicase C-terminal domain in the interval 429–595 (QMEDLYSEIQ…TIVKKIQNIL (167 aa)). The UVR domain occupies 622–657 (KKLIDKLKFDLEEAVNDERFEDAIVLRDKIKELSSK).

It belongs to the UvrB family. As to quaternary structure, forms a heterotetramer with UvrA during the search for lesions. Interacts with UvrC in an incision complex.

The protein resides in the cytoplasm. Its function is as follows. The UvrABC repair system catalyzes the recognition and processing of DNA lesions. A damage recognition complex composed of 2 UvrA and 2 UvrB subunits scans DNA for abnormalities. Upon binding of the UvrA(2)B(2) complex to a putative damaged site, the DNA wraps around one UvrB monomer. DNA wrap is dependent on ATP binding by UvrB and probably causes local melting of the DNA helix, facilitating insertion of UvrB beta-hairpin between the DNA strands. Then UvrB probes one DNA strand for the presence of a lesion. If a lesion is found the UvrA subunits dissociate and the UvrB-DNA preincision complex is formed. This complex is subsequently bound by UvrC and the second UvrB is released. If no lesion is found, the DNA wraps around the other UvrB subunit that will check the other stand for damage. The protein is UvrABC system protein B of Borreliella burgdorferi (strain ZS7) (Borrelia burgdorferi).